Here is a 647-residue protein sequence, read N- to C-terminus: Neutral endopeptidase (647 aa).

In terms of domain architecture, Peptidase M13 spans 1-647; sequence MRRYLAVRGG…LDPEDRITIW (647 aa). His496 contributes to the Zn(2+) binding site. Glu497 is an active-site residue. Positions 500 and 556 each coordinate Zn(2+). The active-site Proton donor is the Asp560.

This sequence belongs to the peptidase M13 family. Zn(2+) is required as a cofactor.

The protein is Neutral endopeptidase (pepO) of Lactobacillus helveticus (Lactobacillus suntoryeus).